The chain runs to 133 residues: Core atranone cluster (CAC) protein 11 (133 aa).

The protein operates within mycotoxin biosynthesis. Part of the core atranone cluster (CAC) which products are predicted to catalyze most or all steps of mycotoxin atranone synthesis, starting from geranylgeranyl pyrophosphate (GGPP). The initial cyclization of GGPP to dolabellane is probably performed by the terpene cyclase ATR13. The Baeyer-Villiger oxidation near the end of the atranone synthesis, which converts atranones D and E to atranones F and G is predicted to be catalyzed by the monooxygenase ATR8. Of the CAC's other predicted gene products, the reducing PKS ATR6 might synthesize a polyketide chain. This polyketide is probably transferred onto the atranone backbone by the polyketide transferase ATR5. Other predicted CAC products include 4 oxygenases (ATR2, ATR3, ATR4, and ATR14), 3 short-chain reductases (ATR7, ATR9, and ATR10), and a methyltransferase (ATR12). These may all be involved in the various steps of atranone biosynthesis, although their specific roles must await experimental determination. This Stachybotrys chlorohalonatus (strain IBT 40285) protein is Core atranone cluster (CAC) protein 11.